A 408-amino-acid chain; its full sequence is Zinc finger and SCAN domain-containing protein 1 (408 aa).

The disordered stretch occupies residues 1 to 34; sequence MLPRPKAPASPRRPQTPTPSEQDADPGPASPRDT. The SCAN box domain occupies 38-120; it reads RLRFRQFQYH…SLVEDLTQMC (83 aa). Disordered stretches follow at residues 136 to 155, 177 to 203, and 215 to 273; these read WSFG…EPSQ, LETT…LLGS, and DEPE…GGTQ. The segment covering 177-187 has biased composition (polar residues); that stretch reads LETTQLQQSLH. 2 consecutive C2H2-type zinc fingers follow at residues 292-314 and 320-342; these read FQCA…QKTH and FPCP…GKIH. Residues 344–379 form a disordered region; sequence LEPPRKKAPRSKGPRESVPPRDGAQGPVAPRSPKRP. Residues 380–402 form a C2H2-type 3 zinc finger; that stretch reads FQCSVCGKAFPWMVHLIDHQKLH.

The protein localises to the nucleus. Its function is as follows. May be involved in transcriptional regulation. The sequence is that of Zinc finger and SCAN domain-containing protein 1 (ZSCAN1) from Homo sapiens (Human).